The following is a 21-amino-acid chain: Nigrocin-2 (21 aa).

A disulfide bridge links C15 with C21.

Expressed by the skin dorsal glands.

It is found in the secreted. Its function is as follows. Thanks to its single linear amphipathic alpha-helix, may integrate into membrane phospholipids, leading to lysis of the membrane. Shows antibacterial activity against both Gram-positive and Gram-negative bacteria and against the fungus C.albicans. Has no hemolytic activity. The sequence is that of Nigrocin-2 from Pelophylax nigromaculatus (Black-spotted frog).